A 231-amino-acid chain; its full sequence is Venom allergen 3 homolog (231 aa).

An N-terminal signal peptide occupies residues 1 to 21; it reads MSSCMLFFTVIIAGVFMGTIA. 3 disulfide bridges follow: Cys25–Cys40, Cys30–Cys124, and Cys51–Cys117. An SCP domain is found at 68–215; it reads VTLHNQLRRK…WNQQYLVCNY (148 aa). N-linked (GlcNAc...) asparagine glycosylation is present at Asn145. Cys196 and Cys213 are joined by a disulfide.

This sequence belongs to the CRISP family. As to expression, expressed by the venom gland.

The protein localises to the secreted. The polypeptide is Venom allergen 3 homolog (Dinoponera quadriceps (South American ant)).